The following is a 566-amino-acid chain: Proline--tRNA ligase (566 aa).

It belongs to the class-II aminoacyl-tRNA synthetase family. ProS type 1 subfamily. In terms of assembly, homodimer.

The protein localises to the cytoplasm. The enzyme catalyses tRNA(Pro) + L-proline + ATP = L-prolyl-tRNA(Pro) + AMP + diphosphate. In terms of biological role, catalyzes the attachment of proline to tRNA(Pro) in a two-step reaction: proline is first activated by ATP to form Pro-AMP and then transferred to the acceptor end of tRNA(Pro). As ProRS can inadvertently accommodate and process non-cognate amino acids such as alanine and cysteine, to avoid such errors it has two additional distinct editing activities against alanine. One activity is designated as 'pretransfer' editing and involves the tRNA(Pro)-independent hydrolysis of activated Ala-AMP. The other activity is designated 'posttransfer' editing and involves deacylation of mischarged Ala-tRNA(Pro). The misacylated Cys-tRNA(Pro) is not edited by ProRS. In Exiguobacterium sibiricum (strain DSM 17290 / CCUG 55495 / CIP 109462 / JCM 13490 / 255-15), this protein is Proline--tRNA ligase.